We begin with the raw amino-acid sequence, 161 residues long: Nucleotide-binding protein Spea_3114 (161 aa).

It belongs to the YajQ family.

In terms of biological role, nucleotide-binding protein. The sequence is that of Nucleotide-binding protein Spea_3114 from Shewanella pealeana (strain ATCC 700345 / ANG-SQ1).